The chain runs to 179 residues: Sec-independent protein translocase protein TatB (179 aa).

The chain crosses the membrane as a helical span at residues 1-21; that stretch reads MFDLGFWEVLIIMLIGLLILG. Composition is skewed to basic and acidic residues over residues 75–86 and 94–106; these read KDVEKNARRFEA and TFRD…DDAA. Positions 75 to 179 are disordered; the sequence is KDVEKNARRF…QGGGGEEKRQ (105 aa).

The protein belongs to the TatB family. In terms of assembly, the Tat system comprises two distinct complexes: a TatABC complex, containing multiple copies of TatA, TatB and TatC subunits, and a separate TatA complex, containing only TatA subunits. Substrates initially bind to the TatABC complex, which probably triggers association of the separate TatA complex to form the active translocon.

The protein localises to the cell inner membrane. In terms of biological role, part of the twin-arginine translocation (Tat) system that transports large folded proteins containing a characteristic twin-arginine motif in their signal peptide across membranes. Together with TatC, TatB is part of a receptor directly interacting with Tat signal peptides. TatB may form an oligomeric binding site that transiently accommodates folded Tat precursor proteins before their translocation. The protein is Sec-independent protein translocase protein TatB of Alkalilimnicola ehrlichii (strain ATCC BAA-1101 / DSM 17681 / MLHE-1).